The primary structure comprises 769 residues: Transferrin receptor protein 1 (769 aa).

Residues 1-70 are Cytoplasmic-facing; sequence MMDQARSAFS…KPKRFNGFIC (70 aa). The interval 1–70 is mediates interaction with SH3BP4; that stretch reads MMDQARSAFS…KPKRFNGFIC (70 aa). Phosphoserine occurs at positions 10 and 19. Tyr-20 is subject to Phosphotyrosine. Residues 20–23 carry the Endocytosis signal motif; sequence YTRF. Thr-21 is modified (phosphothreonine). A Phosphoserine modification is found at Ser-24. The Stop-transfer sequence signature appears at 61–64; sequence KPKR. A lipid anchor (S-palmitoyl cysteine) is attached at Cys-70. A helical; Signal-anchor for type II membrane protein membrane pass occupies residues 71-91; the sequence is YGTIAIILFFLIGFMIGYLGY. Residues 92 to 769 are Extracellular-facing; that stretch reads CKRVEAKSEC…GDIWDIDNEF (678 aa). O-linked (GalNAc...) threonine glycosylation occurs at Thr-107. Positions 232–322 constitute a PA domain; sequence SKAATVTGRL…GTGDPYTPGF (91 aa). Asn-260 and Asn-326 each carry an N-linked (GlcNAc...) asparagine glycan. The interval 578–769 is ligand-binding; sequence TMDVYEKLIQ…GDIWDIDNEF (192 aa). Residues 655–657 carry the Cell attachment site motif; the sequence is RGD. N-linked (GlcNAc...) asparagine glycosylation is found at Asn-731 and Asn-736.

This sequence belongs to the peptidase M28 family. M28B subfamily. As to quaternary structure, homodimer; disulfide-linked. Binds one transferrin molecule per subunit. Interacts with SH3BP4. Homodimer; disulfide-linked. Binds one transferrin or HFE molecule per subunit. Binds the HLA class II histocompatibility antigen, DR1. Interacts with SH3BP3. Interacts with STEAP3; facilitates TFRC endocytosis in erythroid precursor cells. Stearoylated by ZDHHC6 which inhibits TFRC-mediated activation of the JNK pathway and promotes mitochondrial fragmentation. Stearoylation does not affect iron uptake. In terms of processing, N- and O-glycosylated, phosphorylated and palmitoylated.

It localises to the cell membrane. The protein resides in the melanosome. In terms of biological role, cellular uptake of iron occurs via receptor-mediated endocytosis of ligand-occupied transferrin receptor into specialized endosomes. Endosomal acidification leads to iron release. The apotransferrin-receptor complex is then recycled to the cell surface with a return to neutral pH and the concomitant loss of affinity of apotransferrin for its receptor. Transferrin receptor is necessary for development of erythrocytes and the nervous system. Positively regulates T and B cell proliferation through iron uptake. Acts as a lipid sensor that regulates mitochondrial fusion by regulating activation of the JNK pathway. When dietary levels of stearate (C18:0) are low, promotes activation of the JNK pathway, resulting in HUWE1-mediated ubiquitination and subsequent degradation of the mitofusin MFN2 and inhibition of mitochondrial fusion. When dietary levels of stearate (C18:0) are high, TFRC stearoylation inhibits activation of the JNK pathway and thus degradation of the mitofusin MFN2. Mediates uptake of NICOL1 into fibroblasts where it may regulate extracellular matrix production. In Felis catus (Cat), this protein is Transferrin receptor protein 1 (TFRC).